The chain runs to 590 residues: Shugoshin (590 aa).

A disordered region spans residues 1-20 (MPKRKIAPNKESSRRTVSHD). Residues 11-20 (ESSRRTVSHD) are compositionally biased toward basic and acidic residues. Positions 25–86 (QIQEFQNLMD…QENVTLRSKT (62 aa)) form a coiled coil. Disordered regions lie at residues 133–235 (LRTM…QVEE), 291–337 (PSNP…HSMK), and 411–550 (RNRE…NSNI). A compositionally biased stretch (basic and acidic residues) spans 173–185 (SFNKDDGPDLEPK). A compositionally biased stretch (low complexity) spans 302–326 (PSATLPTTTSDASTVYPSSSSSTNS). The segment covering 328–337 (PKTKIKHSMK) has biased composition (basic residues). A compositionally biased stretch (basic and acidic residues) spans 448–459 (KKTEDEIHEDTA). Residues 513 to 526 (IVNNLSDENSTTRP) show a composition bias toward polar residues. A compositionally biased stretch (low complexity) spans 527–550 (SKSSKGTSNNNNNYNNFDNNNSNI).

Belongs to the shugoshin family. Ubiquitinated by the anaphase promoting complex (APC) at the onset of anaphase, conducting to its degradation.

It is found in the chromosome. The protein localises to the centromere. It localises to the kinetochore. The protein resides in the cytoplasm. Its subcellular location is the cytoskeleton. It is found in the spindle pole. Plays a central role in chromosome cohesion during mitosis and meiosis divisions by preventing premature dissociation of cohesin complex from centromeres after prophase, when most of cohesin complex dissociates from chromosomes arms. Probably act by protecting REC8 and RAD21 from separase degradation during anaphase. Also acts as a spindle checkpoint component required for sensing tension between sister chromatids during mitosis, its degradation when they separate preventing cell cycle arrest and chromosome loss in anaphase, a time when sister chromatids are no longer under tension. The polypeptide is Shugoshin (SGO1) (Saccharomyces cerevisiae (strain ATCC 204508 / S288c) (Baker's yeast)).